The chain runs to 1450 residues: Protein clueless (1450 aa).

2 disordered regions span residues 1–126 and 266–287; these read MALE…PGSE and KTRP…VSEP. Residues 29–60 are compositionally biased toward low complexity; the sequence is NNSSAGKKQQQQQQPNQNQNLVNGNGNAADGP. A compositionally biased stretch (basic residues) spans 62-71; that stretch reads AKKKGKKNRN. A Phosphoserine modification is found at Ser271. In terms of domain architecture, Clu spans 425 to 667; sequence RAEDAFSSKL…RTFPPDVNFL (243 aa). 2 stretches are compositionally biased toward basic and acidic residues: residues 725-734 and 743-765; these read KQSEKTEEKA and KESS…EEKQ. 2 disordered regions span residues 725–775 and 959–1011; these read KQSE…TKTA and PAVS…SDWT. Positions 968-983 are enriched in basic residues; it reads KKRSNGNKHNKHKSKG. The segment covering 984-1008 has biased composition (low complexity); that stretch reads NKQQASGNQNGSSAGSSSGGSSSSS. 3 TPR repeats span residues 1102 to 1135, 1228 to 1261, and 1263 to 1296; these read AYNF…LNNV, ALID…NIKY, and GSKA…EKET. The interval 1410 to 1450 is disordered; it reads NNNGDTEAETKDATKDNKDLAGASTQLTNGDKDAETAVASS. A compositionally biased stretch (basic and acidic residues) spans 1417–1428; that stretch reads AETKDATKDNKD.

It belongs to the CLU family.

Its subcellular location is the cytoplasm. Its function is as follows. mRNA-binding protein involved in proper cytoplasmic distribution of mitochondria. The sequence is that of Protein clueless from Drosophila ananassae (Fruit fly).